Reading from the N-terminus, the 423-residue chain is Pseudouridylate synthase 1 homolog (423 aa).

Residues 32–75 (AGNKVPPALASHQPDRKGRGGWVWEETEHPAKRVKGGEDEEPPR) form a disordered region. The span at 57–68 (ETEHPAKRVKGG) shows a compositional bias: basic and acidic residues. Asp-142 functions as the Nucleophile in the catalytic mechanism. Residues 403-423 (ADTGAKVPSSLEGSEGDGDTD) are disordered. Residues Ser-411 and Ser-416 each carry the phosphoserine modification. Thr-422 carries the phosphothreonine modification.

Belongs to the tRNA pseudouridine synthase TruA family. As to quaternary structure, monomer. Forms a complex with RARG and the SRA1 RNA in the nucleus.

The protein resides in the nucleus. Its subcellular location is the cytoplasm. It localises to the mitochondrion. The catalysed reaction is a uridine in tRNA = a pseudouridine in tRNA. The enzyme catalyses uridine(38/39/40) in tRNA = pseudouridine(38/39/40) in tRNA. It catalyses the reaction a uridine in mRNA = a pseudouridine in mRNA. Pseudouridylate synthase that catalyzes pseudouridylation of tRNAs and mRNAs. Acts on positions 27/28 in the anticodon stem and also positions 34 and 36 in the anticodon of an intron containing tRNA. Also catalyzes pseudouridylation of mRNAs: mediates pseudouridylation of mRNAs with the consensus sequence 5'-UGUAG-3'. Acts as a regulator of pre-mRNA splicing by mediating pseudouridylation of pre-mRNAs at locations associated with alternatively spliced regions. Pseudouridylation of pre-mRNAs near splice sites directly regulates mRNA splicing and mRNA 3'-end processing. Involved in regulation of nuclear receptor activity through pseudouridylation of SRA1 mRNA. Functionally, does not form pseudouridine when expressed in vitro. The protein is Pseudouridylate synthase 1 homolog of Mus musculus (Mouse).